We begin with the raw amino-acid sequence, 460 residues long: uncharacterized protein (460 aa).

The 59-residue stretch at 6–64 (PVKKNSTYNLYITGMGTKGEGIGKINNFTIFVTGAILGEEVEVNIIKVNKNYAVGKLLN) folds into the TRAM domain. Positions 77, 83, 86, and 163 each coordinate [4Fe-4S] cluster. Residues glutamine 287, tyrosine 316, glutamate 337, and aspartate 385 each coordinate S-adenosyl-L-methionine. Residue cysteine 412 is the Nucleophile of the active site.

It belongs to the class I-like SAM-binding methyltransferase superfamily. RNA M5U methyltransferase family.

This is an uncharacterized protein from Clostridium tetani (strain Massachusetts / E88).